Reading from the N-terminus, the 205-residue chain is Non-specific lipid transfer protein GPI-anchored 21 (205 aa).

Positions 1-27 (MNSNSFLISAALIFSLLSSNSPTSILA) are cleaved as a signal peptide. Cystine bridges form between Cys-33–Cys-75, Cys-44–Cys-59, Cys-60–Cys-100, and Cys-73–Cys-109. Asn-89 carries an N-linked (GlcNAc...) asparagine glycan. The disordered stretch occupies residues 116–182 (LPTPGPASFG…FAPPPPSSSP (67 aa)). A compositionally biased stretch (low complexity) spans 126 to 156 (PTTSPTDSQTSDPEGSASFRPPTSPTTSQTP). Ser-179 is lipidated: GPI-anchor amidated serine. A propeptide spans 180–205 (SSPSSSHSLKLSYLLFAFAFTIIKFI) (removed in mature form).

This sequence belongs to the plant LTP family.

Its subcellular location is the cell membrane. Probable lipid transfer protein. The chain is Non-specific lipid transfer protein GPI-anchored 21 from Arabidopsis thaliana (Mouse-ear cress).